Reading from the N-terminus, the 284-residue chain is Asialoglycoprotein receptor 1 (284 aa).

Positions 1-18 (MTKDYQDFQHLDNDNDHH) are enriched in basic and acidic residues. The tract at residues 1-25 (MTKDYQDFQHLDNDNDHHQLRRGPP) is disordered. The Cytoplasmic portion of the chain corresponds to 1-39 (MTKDYQDFQHLDNDNDHHQLRRGPPPTPRLLQRLCSGSR). The Endocytosis signal signature appears at 5–8 (YQDF). Cys-35 carries the S-palmitoyl cysteine lipid modification. A helical; Signal-anchor for type II membrane protein membrane pass occupies residues 40-60 (LLLLSSSLSILLLVVVCVITS). Residues 59–117 (TSQNSQLREDLLALRQNFSNLTVSTEDQVKALSTQGSSVGRKMKLVESKLEKQQKDLTE) adopt a coiled-coil conformation. Residues 61-284 (QNSQLREDLL…VCETKLDKAN (224 aa)) are Extracellular-facing. N-linked (GlcNAc...) asparagine glycosylation is found at Asn-75, Asn-78, and Asn-146. 3 cysteine pairs are disulfide-bonded: Cys-153/Cys-164, Cys-181/Cys-276, and Cys-254/Cys-268. The region spanning 160–277 (YEGSCYWFSS…CRRPYRWVCE (118 aa)) is the C-type lectin domain. Ca(2+) is bound by residues Val-190, Glu-196, Asp-215, Gln-239, Asp-241, Glu-252, Asp-253, Asn-264, Asp-265, and Glu-277.

In terms of assembly, interacts with LASS2. In terms of processing, phosphorylated on a cytoplasmic Ser residue. In terms of tissue distribution, expressed exclusively in hepatic parenchymal cells.

Its subcellular location is the membrane. Its function is as follows. Mediates the endocytosis of plasma glycoproteins to which the terminal sialic acid residue on their complex carbohydrate moieties has been removed. The receptor recognizes terminal galactose and N-acetylgalactosamine units. After ligand binding to the receptor, the resulting complex is internalized and transported to a sorting organelle, where receptor and ligand are disassociated. The receptor then returns to the cell membrane surface. The protein is Asialoglycoprotein receptor 1 (Asgr1) of Mus musculus (Mouse).